The chain runs to 260 residues: Glutathione S-transferase domain-containing protein DDB_G0280881 (260 aa).

Residues 7–96 enclose the GST N-terminal domain; that stretch reads KVDFIFYTNG…YLAQKYNTFL (90 aa). The GST C-terminal domain maps to 102–228; sequence NPKENSDVIT…QQISEGFKNF (127 aa).

The protein belongs to the GST superfamily.

This chain is Glutathione S-transferase domain-containing protein DDB_G0280881, found in Dictyostelium discoideum (Social amoeba).